The primary structure comprises 354 residues: Pyrimidine monooxygenase RutA (354 aa).

FMN is bound by residues 49–50 (IK), asparagine 115, glutamate 124, 140–141 (RY), and serine 189.

Belongs to the NtaA/SnaA/DszA monooxygenase family. RutA subfamily.

The enzyme catalyses uracil + FMNH2 + NADH + O2 = (Z)-3-ureidoacrylate + FMN + NAD(+) + H2O + H(+). The catalysed reaction is thymine + FMNH2 + NADH + O2 = (Z)-2-methylureidoacrylate + FMN + NAD(+) + H2O + H(+). Functionally, catalyzes the pyrimidine ring opening between N-3 and C-4 by an unusual flavin hydroperoxide-catalyzed mechanism, adding oxygen atoms in the process to yield ureidoacrylate peracid, that immediately reacts with FMN forming ureidoacrylate and FMN-N(5)-oxide. The FMN-N(5)-oxide reacts spontaneously with NADH to produce FMN. Requires the flavin reductase RutF to regenerate FMN in vivo. This is Pyrimidine monooxygenase RutA from Caulobacter sp. (strain K31).